Here is a 94-residue protein sequence, read N- to C-terminus: MTKSELIARLAARHPQLGTKDAELAVKVILDAMAKSLSQGQRIEIRGFGSFDLNYRPPRVGRNPKSGEKVRVPEKYVPHFKAGKEMRERVDQKN.

This sequence belongs to the bacterial histone-like protein family. As to quaternary structure, heterodimer of an alpha and a beta chain.

Its function is as follows. This protein is one of the two subunits of integration host factor, a specific DNA-binding protein that functions in genetic recombination as well as in transcriptional and translational control. The polypeptide is Integration host factor subunit beta (Nitrosospira multiformis (strain ATCC 25196 / NCIMB 11849 / C 71)).